The chain runs to 260 residues: Sperm microtubule inner protein 6 (260 aa).

It belongs to the SPMIP6 family. As to quaternary structure, microtubule inner protein component of sperm flagellar doublet microtubules. Interacts with alpha-tubulin. Testis-specific, expressed exclusively in germ cells (at protein level). As to expression, testis-specific. In terms of tissue distribution, expressed in both lung and testis.

It localises to the cytoplasm. Its subcellular location is the cytoskeleton. It is found in the nucleus. The protein resides in the mitochondrion. The protein localises to the flagellum axoneme. Functionally, may participate in intramanchette transport and midpiece formation of the sperm tail. May play a potential role in somatic cell proliferation. In Mus musculus (Mouse), this protein is Sperm microtubule inner protein 6 (SPMIP6).